A 215-amino-acid polypeptide reads, in one-letter code: Sodium channel regulatory subunit beta-2 (215 aa).

A signal peptide spans 1–29; the sequence is MHRDAWLPRPAFSLTGLSLFFSLVPPGRS. Residues 30 to 157 lie on the Extracellular side of the membrane; the sequence is MEVTAPTTLS…LEVPPERDST (128 aa). Residues 32 to 154 enclose the Ig-like C2-type domain; that stretch reads VTAPTTLSVL…QVLLEVPPER (123 aa). Residues N42, N66, and N74 are each glycosylated (N-linked (GlcNAc...) asparagine). 2 cysteine pairs are disulfide-bonded: C50–C127 and C72–C75. The chain crosses the membrane as a helical span at residues 158–179; it reads VAVIVGASVGGFLAVVILVLMV. At 180 to 215 the chain is on the cytoplasmic side; that stretch reads VKCVRRKKEQKLSTDDLKTEEEGKMDGEGNAEDGTK. Positions 188–215 are disordered; the sequence is EQKLSTDDLKTEEEGKMDGEGNAEDGTK. A compositionally biased stretch (basic and acidic residues) spans 189–215; that stretch reads QKLSTDDLKTEEEGKMDGEGNAEDGTK. S192 carries the post-translational modification Phosphoserine.

The protein belongs to the sodium channel auxiliary subunit SCN2B (TC 8.A.17) family. A voltage-gated sodium (Nav) channel consists of an ion-conducting pore-forming alpha subunit functional on its own that is regulated by one or more beta subunits. The beta subunit SCN2B is disulfide-linked to the pore-forming alpha subunit. Interacts with SCN1A; regulatory subunit of SCN1A/Nav1.1. Interacts with SCN2A; regulatory subunit of SCN2A/Nav1.2. Interacts with SCN3A; regulatory subunit of SCN3A/Nav1.3. Interacts with SCN5A; regulatory subunit of SCN5A/Nav1.5. Interacts with SCN8A; regulatory subunit of SCN8A/Nav1.6. Interacts with SCN9A; regulatory subunit of SCN9A/Nav1.7. Interacts with SCN10A; regulatory subunit of SCN10A/Nav1.8. Interacts with TNR; may play a crucial role in clustering and regulation of activity of SCN2B-containing Nav channels at nodes of Ranvier.

It is found in the cell membrane. The protein localises to the cell projection. Its subcellular location is the axon. Regulatory subunit of multiple voltage-gated sodium (Nav) channels directly mediating the depolarization of excitable membranes. Navs, also called VGSCs (voltage-gated sodium channels) or VDSCs (voltage-dependent sodium channels), operate by switching between closed and open conformations depending on the voltage difference across the membrane. In the open conformation they allow Na(+) ions to selectively pass through the pore, along their electrochemical gradient. The influx of Na+ ions provokes membrane depolarization, initiating the propagation of electrical signals throughout cells and tissues. The accessory beta subunits participate in localization and functional modulation of the Nav channels. Modulates the activity of SCN1A/Nav1.1, SCN2A/Nav1.2, SCN2A/Nav1.3, SCN5A/Nav1.5, SCN8A/Nav1.6, SCN9A/Nav1.7 and SCN10A/Nav1.8. This chain is Sodium channel regulatory subunit beta-2, found in Mus musculus (Mouse).